The following is a 372-amino-acid chain: uncharacterized protein (372 aa).

The first 33 residues, 1 to 33 (MVRRALRLAAGTASLAAGTWLLRALHGTPAALG), serve as a signal peptide directing secretion.

It to K.pneumoniae RomA.

This is an uncharacterized protein from Mycobacterium bovis (strain ATCC BAA-935 / AF2122/97).